Reading from the N-terminus, the 655-residue chain is Broad substrate specificity ATP-binding cassette transporter ABCG2 (655 aa).

The Cytoplasmic portion of the chain corresponds to 1–395; the sequence is MSSNSYEVSI…KNLLGNPQAS (395 aa). In terms of domain architecture, ABC transporter spans 36-285; the sequence is LSFHNICYRV…FGAIGFRCEP (250 aa). ATP-binding positions include 79–86, 183–189, E210, and H242; these read GPTGGGKS and RGVSGGE. The ABC transmembrane type-2 domain maps to 389 to 651; the sequence is LGNPQASIAQ…TIAYLKLLFL (263 aa). A helical transmembrane segment spans residues 396–416; that stretch reads IAQLIVTVFLGLVIGAIFYDL. At 417-428 the chain is on the extracellular side; that stretch reads KNDPAGIQNRAG. Residues 429–449 traverse the membrane as a helical segment; that stretch reads VLFFLTTNQCFSSVSAVELLV. At 450 to 477 the chain is on the cytoplasmic side; sequence VEKKLFIHEYISGYYRVSSYFFGKLLSD. A helical transmembrane segment spans residues 478–498; it reads LLPMRMLPSIIFTCITYFLLG. The Extracellular segment spans residues 499–506; the sequence is LKPKVEAF. The chain crosses the membrane as a helical span at residues 507–527; sequence FIMMLTLMMVAYSASSMALAI. At 528-535 the chain is on the cytoplasmic side; sequence AAGQSVVS. Residues 536–556 form a helical membrane-spanning segment; the sequence is IATLLMTISFVFMMIFSGLLV. At 557–630 the chain is on the extracellular side; that stretch reads NLKTVVPWLS…ISPWGLWKNH (74 aa). A disulfide bond links C592 and C608. N596 and N600 each carry an N-linked (GlcNAc...) asparagine glycan. Residues 631–651 traverse the membrane as a helical segment; it reads VALACMIVIFLTIAYLKLLFL. The Cytoplasmic portion of the chain corresponds to 652 to 655; the sequence is KKFS.

It belongs to the ABC transporter superfamily. ABCG family. Eye pigment precursor importer (TC 3.A.1.204) subfamily. As to quaternary structure, homodimer; disulfide-linked. The minimal functional unit is a homodimer, but the major oligomeric form in plasma membrane is a homotetramer with possibility of higher order oligomerization up to homododecamers. Post-translationally, N-glycosylated. Glycosylation-deficient ABCG2 is normally expressed and functional. Phosphorylated. Phosphorylation may regulate the localization to the plasma membrane, the homooligomerization and therefore, the activity of the transporter.

The protein localises to the cell membrane. It is found in the apical cell membrane. It localises to the mitochondrion membrane. It carries out the reaction ATP + H2O + xenobioticSide 1 = ADP + phosphate + xenobioticSide 2.. The catalysed reaction is urate(in) + ATP + H2O = urate(out) + ADP + phosphate + H(+). The enzyme catalyses indoxyl sulfate(in) + ATP + H2O = indoxyl sulfate(out) + ADP + phosphate + H(+). It catalyses the reaction sphing-4-enine 1-phosphate(in) + ATP + H2O = sphing-4-enine 1-phosphate(out) + ADP + phosphate + H(+). It carries out the reaction estrone 3-sulfate(in) + ATP + H2O = estrone 3-sulfate(out) + ADP + phosphate + H(+). The catalysed reaction is dehydroepiandrosterone 3-sulfate(in) + ATP + H2O = dehydroepiandrosterone 3-sulfate(out) + ADP + phosphate + H(+). The enzyme catalyses 4-methylumbelliferone sulfate(in) + ATP + H2O = 4-methylumbelliferone sulfate(out) + ADP + phosphate + H(+). It catalyses the reaction 5,7-dimethyl-2-methylamino-4-(3-pyridylmethyl)-1,3-benzothiazol-6-yl beta-D-glucuronate(in) + ATP + H2O = 5,7-dimethyl-2-methylamino-4-(3-pyridylmethyl)-1,3-benzothiazol-6-yl beta-D-glucuronate(out) + ADP + phosphate + H(+). It carries out the reaction 4-methylumbelliferone beta-D-glucuronate(in) + ATP + H2O = 4-methylumbelliferone beta-D-glucuronate(out) + ADP + phosphate + H(+). The catalysed reaction is 5,7-dimethyl-2-methylamino-4-(3-pyridylmethyl)-1,3-benzothiazol-6-yl sulfate(in) + ATP + H2O = 5,7-dimethyl-2-methylamino-4-(3-pyridylmethyl)-1,3-benzothiazol-6-yl sulfate(out) + ADP + phosphate + H(+). The enzyme catalyses 17beta-estradiol 17-O-(beta-D-glucuronate)(in) + ATP + H2O = 17beta-estradiol 17-O-(beta-D-glucuronate)(out) + ADP + phosphate + H(+). It catalyses the reaction methotrexate(in) + ATP + H2O = methotrexate(out) + ADP + phosphate + H(+). It carries out the reaction riboflavin(in) + ATP + H2O = riboflavin(out) + ADP + phosphate + H(+). The catalysed reaction is pheophorbide a(in) + ATP + H2O = pheophorbide a(out) + ADP + phosphate + H(+). The enzyme catalyses itaconate(in) + ATP + H2O = itaconate(out) + ADP + phosphate + H(+). In terms of biological role, broad substrate specificity ATP-dependent transporter of the ATP-binding cassette (ABC) family that actively extrudes a wide variety of physiological compounds, dietary toxins and xenobiotics from cells. Involved in porphyrin homeostasis, mediating the export of protoporphyrin IX (PPIX) from both mitochondria to cytosol and cytosol to extracellular space, it also functions in the cellular export of heme. Also mediates the efflux of sphingosine-1-P from cells. Acts as a urate exporter functioning in both renal and extrarenal urate excretion. In kidney, it also functions as a physiological exporter of the uremic toxin indoxyl sulfate. Also involved in the excretion of steroids like estrone 3-sulfate/E1S, 3beta-sulfooxy-androst-5-en-17-one/DHEAS, and other sulfate conjugates. Mediates the secretion of the riboflavin and biotin vitamins into milk. Extrudes pheophorbide a, a phototoxic porphyrin catabolite of chlorophyll, reducing its bioavailability. Plays an important role in the exclusion of xenobiotics from the brain. It confers to cells a resistance to multiple drugs and other xenobiotics including mitoxantrone, pheophorbide, camptothecin, methotrexate, azidothymidine, and the anthracyclines daunorubicin and doxorubicin, through the control of their efflux. In placenta, it limits the penetration of drugs from the maternal plasma into the fetus. May play a role in early stem cell self-renewal by blocking differentiation. In inflammatory macrophages, exports itaconate from the cytosol to the extracellular compartment and limits the activation of TFEB-dependent lysosome biogenesis involved in antibacterial innate immune response. This chain is Broad substrate specificity ATP-binding cassette transporter ABCG2 (ABCG2), found in Bos taurus (Bovine).